A 75-amino-acid chain; its full sequence is Porwaprin-d (75 aa).

Positions 1-24 (MSSGGLLLLLGLLTLWAELTPVSS) are cleaved as a signal peptide. One can recognise a WAP domain in the interval 27–72 (RPKKPGLCPPRPQKPPCVRECKNDWRCPGEQKCCRYGCIYECRDPI). 4 disulfide bridges follow: Cys-34/Cys-60, Cys-43/Cys-64, Cys-47/Cys-59, and Cys-53/Cys-68.

The protein belongs to the venom waprin family. Expressed by the venom gland.

The protein resides in the secreted. In terms of biological role, damages membranes of susceptible bacteria. Has no hemolytic activity. Not toxic to mice. Does not inhibit the proteinases elastase and cathepsin G. The chain is Porwaprin-d from Pseudechis porphyriacus (Red-bellied black snake).